A 276-amino-acid chain; its full sequence is Shikimate dehydrogenase (NADP(+)) (276 aa).

Shikimate is bound by residues Ser15–Ser17 and Thr62. The Proton acceptor role is filled by Lys66. Shikimate is bound by residues Asn87 and Asp103. NADP(+) is bound by residues Gly127–Ala131, Asn151–Lys156, and Met215. Tyr217 provides a ligand contact to shikimate. Gly239 serves as a coordination point for NADP(+).

Belongs to the shikimate dehydrogenase family. In terms of assembly, homodimer.

It catalyses the reaction shikimate + NADP(+) = 3-dehydroshikimate + NADPH + H(+). Its pathway is metabolic intermediate biosynthesis; chorismate biosynthesis; chorismate from D-erythrose 4-phosphate and phosphoenolpyruvate: step 4/7. Involved in the biosynthesis of the chorismate, which leads to the biosynthesis of aromatic amino acids. Catalyzes the reversible NADPH linked reduction of 3-dehydroshikimate (DHSA) to yield shikimate (SA). This is Shikimate dehydrogenase (NADP(+)) from Cellvibrio japonicus (strain Ueda107) (Pseudomonas fluorescens subsp. cellulosa).